We begin with the raw amino-acid sequence, 704 residues long: ATP-dependent zinc metalloprotease FtsH (704 aa).

The Cytoplasmic segment spans residues 1–17 (MADSAKTPRGKKRRPFT). The chain crosses the membrane as a helical span at residues 18–38 (GLALWIIVALLLGMAMFSLFG). The Extracellular portion of the chain corresponds to 39-127 (RDGYQQIDTQ…DEIASSSWWS (89 aa)). The chain crosses the membrane as a helical span at residues 128 to 148 (TLLLSFLPLLIFIGLFWFLIM). Residues 149 to 704 (NAQGGGKAMQ…GSAGTDGTGR (556 aa)) are Cytoplasmic-facing. Residue 217 to 224 (GPPGTGKT) coordinates ATP. His-439 lines the Zn(2+) pocket. Glu-440 is a catalytic residue. His-443 and Asp-515 together coordinate Zn(2+). The tract at residues 624–704 (PREVWISSTE…GSAGTDGTGR (81 aa)) is disordered. Gly residues predominate over residues 681-704 (PHGGEPGGGGYGYDGSAGTDGTGR).

The protein in the central section; belongs to the AAA ATPase family. This sequence in the C-terminal section; belongs to the peptidase M41 family. Homohexamer. Zn(2+) is required as a cofactor.

It localises to the cell membrane. Acts as a processive, ATP-dependent zinc metallopeptidase for both cytoplasmic and membrane proteins. Plays a role in the quality control of integral membrane proteins. In Brachybacterium faecium (strain ATCC 43885 / DSM 4810 / JCM 11609 / LMG 19847 / NBRC 14762 / NCIMB 9860 / 6-10), this protein is ATP-dependent zinc metalloprotease FtsH.